A 192-amino-acid polypeptide reads, in one-letter code: Phosphoheptose isomerase (192 aa).

The SIS domain occupies 37 to 192 (LADSFKGGGK…IQLIEKEMVK (156 aa)). 52-54 (NGG) contacts substrate. 2 residues coordinate Zn(2+): histidine 61 and glutamate 65. Residues glutamate 65, 93 to 94 (ND), 119 to 121 (STS), serine 124, and glutamine 172 contribute to the substrate site. Zn(2+) contacts are provided by glutamine 172 and histidine 180.

It belongs to the SIS family. GmhA subfamily. In terms of assembly, homotetramer. It depends on Zn(2+) as a cofactor.

The protein localises to the cytoplasm. It carries out the reaction 2 D-sedoheptulose 7-phosphate = D-glycero-alpha-D-manno-heptose 7-phosphate + D-glycero-beta-D-manno-heptose 7-phosphate. It functions in the pathway carbohydrate biosynthesis; D-glycero-D-manno-heptose 7-phosphate biosynthesis; D-glycero-alpha-D-manno-heptose 7-phosphate and D-glycero-beta-D-manno-heptose 7-phosphate from sedoheptulose 7-phosphate: step 1/1. Its function is as follows. Catalyzes the isomerization of sedoheptulose 7-phosphate in D-glycero-D-manno-heptose 7-phosphate. This chain is Phosphoheptose isomerase, found in Escherichia coli O7:K1 (strain IAI39 / ExPEC).